We begin with the raw amino-acid sequence, 260 residues long: MILRSLSCRFLTIALCDAAEPWQLGFQDAATPMMQGIIDLHHDIFFFLILILVFVLWMLVRALWHFNEQTNPIPQRIVHGTTIEIIWTIFPSVILLFIAIPSFALLYSMDGVLVDPAITIKAIGHQWYWTYEYSDYNSSDEQSLTFDSYTIPEDDPELGQSRLLEVDNRVVVPAKTHLRMIVTPADVLHSWAVPSLGVKCDAVPGRLNLTSILVQREGVYYGQCSEICGTNHAFMPIVVEAVTLKDYADWVSNQLILQTN.

Residues 1-43 (MILRSLSCRFLTIALCDAAEPWQLGFQDAATPMMQGIIDLHHD) lie on the Mitochondrial intermembrane side of the membrane. Residues 44 to 64 (IFFFLILILVFVLWMLVRALW) form a helical membrane-spanning segment. Residues 65-84 (HFNEQTNPIPQRIVHGTTIE) lie on the Mitochondrial matrix side of the membrane. Residues 85-105 (IIWTIFPSVILLFIAIPSFAL) form a helical membrane-spanning segment. Topologically, residues 106–260 (LYSMDGVLVD…VSNQLILQTN (155 aa)) are mitochondrial intermembrane. Positions 189, 224, 226, 228, 232, and 235 each coordinate Cu cation. Glu-226 provides a ligand contact to Mg(2+).

Belongs to the cytochrome c oxidase subunit 2 family. Component of the cytochrome c oxidase (complex IV, CIV), a multisubunit enzyme composed of a catalytic core of 3 subunits and several supernumerary subunits. The complex exists as a monomer or a dimer and forms supercomplexes (SCs) in the inner mitochondrial membrane with ubiquinol-cytochrome c oxidoreductase (cytochrome b-c1 complex, complex III, CIII). The cofactor is Cu cation.

The protein resides in the mitochondrion inner membrane. It catalyses the reaction 4 Fe(II)-[cytochrome c] + O2 + 8 H(+)(in) = 4 Fe(III)-[cytochrome c] + 2 H2O + 4 H(+)(out). In terms of biological role, component of the cytochrome c oxidase, the last enzyme in the mitochondrial electron transport chain which drives oxidative phosphorylation. The respiratory chain contains 3 multisubunit complexes succinate dehydrogenase (complex II, CII), ubiquinol-cytochrome c oxidoreductase (cytochrome b-c1 complex, complex III, CIII) and cytochrome c oxidase (complex IV, CIV), that cooperate to transfer electrons derived from NADH and succinate to molecular oxygen, creating an electrochemical gradient over the inner membrane that drives transmembrane transport and the ATP synthase. Cytochrome c oxidase is the component of the respiratory chain that catalyzes the reduction of oxygen to water. Electrons originating from reduced cytochrome c in the intermembrane space (IMS) are transferred via the dinuclear copper A center (CU(A)) of subunit 2 and heme A of subunit 1 to the active site in subunit 1, a binuclear center (BNC) formed by heme A3 and copper B (CU(B)). The BNC reduces molecular oxygen to 2 water molecules using 4 electrons from cytochrome c in the IMS and 4 protons from the mitochondrial matrix. This is Cytochrome c oxidase subunit 2 (COX2) from Triticum aestivum (Wheat).